A 436-amino-acid chain; its full sequence is Bifunctional protein GlmU (436 aa).

Residues 1–226 are pyrophosphorylase; sequence MNEISIIILA…ETNFMGINDK (226 aa). Residues 9 to 12, K23, Q75, and 82 to 83 contribute to the UDP-N-acetyl-alpha-D-glucosamine site; these read LAAG and GT. D105 is a binding site for Mg(2+). UDP-N-acetyl-alpha-D-glucosamine is bound by residues G138, E152, N167, and N224. N224 lines the Mg(2+) pocket. Positions 227-247 are linker; that stretch reads FALSIAEEIMQNRIKENLMKN. The tract at residues 248 to 436 is N-acetyltransferase; that stretch reads GVIMSLPDTI…YKFFGKNDEK (189 aa). Residues R311 and K328 each coordinate UDP-N-acetyl-alpha-D-glucosamine. Catalysis depends on H339, which acts as the Proton acceptor. Residues Y342 and N353 each coordinate UDP-N-acetyl-alpha-D-glucosamine. Residues 362 to 363, S381, A399, and R416 contribute to the acetyl-CoA site; that span reads NY.

In the N-terminal section; belongs to the N-acetylglucosamine-1-phosphate uridyltransferase family. This sequence in the C-terminal section; belongs to the transferase hexapeptide repeat family. Homotrimer. Mg(2+) is required as a cofactor.

It is found in the cytoplasm. The catalysed reaction is alpha-D-glucosamine 1-phosphate + acetyl-CoA = N-acetyl-alpha-D-glucosamine 1-phosphate + CoA + H(+). It carries out the reaction N-acetyl-alpha-D-glucosamine 1-phosphate + UTP + H(+) = UDP-N-acetyl-alpha-D-glucosamine + diphosphate. It functions in the pathway nucleotide-sugar biosynthesis; UDP-N-acetyl-alpha-D-glucosamine biosynthesis; N-acetyl-alpha-D-glucosamine 1-phosphate from alpha-D-glucosamine 6-phosphate (route II): step 2/2. It participates in nucleotide-sugar biosynthesis; UDP-N-acetyl-alpha-D-glucosamine biosynthesis; UDP-N-acetyl-alpha-D-glucosamine from N-acetyl-alpha-D-glucosamine 1-phosphate: step 1/1. Its pathway is bacterial outer membrane biogenesis; LPS lipid A biosynthesis. Functionally, catalyzes the last two sequential reactions in the de novo biosynthetic pathway for UDP-N-acetylglucosamine (UDP-GlcNAc). The C-terminal domain catalyzes the transfer of acetyl group from acetyl coenzyme A to glucosamine-1-phosphate (GlcN-1-P) to produce N-acetylglucosamine-1-phosphate (GlcNAc-1-P), which is converted into UDP-GlcNAc by the transfer of uridine 5-monophosphate (from uridine 5-triphosphate), a reaction catalyzed by the N-terminal domain. The sequence is that of Bifunctional protein GlmU from Campylobacter fetus subsp. fetus (strain 82-40).